A 405-amino-acid chain; its full sequence is MSHKDRRGNSSNDGSSFKLNETFTSSEVEVKPTFESMGLREELLRGIFNYGFEKPSAIQQRAILPIIKGRDTIAQAQSGTGKTATFSIGALQCVEVNVRSPQVLILSPTRELAQQIQKVALALSEFMNIQVHACVGGKNLSDDVKKLETGVHIVSGTPGRVLDMITRKSLPTRHIKMMILDEADEMLSLGFQQQINDVYRYLPNGTQIVLVSATLTQDVVSMTEKFMTKPVRILLKRDELTLDGIKQFFVSVEKEDWKFGTLCDIYDSLTITQAVIFCNTKKKVDQLTEQMRDANFTVASMHGDMVQKEREEIIKSFRSGENRVLITTDILARGIDVQQVSLVINYDLPIDRENYIHRIGRSGRFGRKGVAINFVKNSDIRILRDIEQFYSTQIDEMPVNFASII.

Positions proline 32–glutamine 60 match the Q motif motif. The Helicase ATP-binding domain occupies isoleucine 63–isoleucine 233. Alanine 76–threonine 83 contributes to the ATP binding site. A DEAD box motif is present at residues aspartate 181–aspartate 184. The Helicase C-terminal domain occupies glycine 244–isoleucine 405.

It belongs to the DEAD box helicase family. eIF4A subfamily.

It is found in the cytoplasm. It catalyses the reaction ATP + H2O = ADP + phosphate + H(+). Its function is as follows. ATP-dependent RNA helicase which is a subunit of the eIF4F complex involved in cap recognition and is required for mRNA binding to ribosome. In the current model of translation initiation, eIF4A unwinds RNA secondary structures in the 5'-UTR of mRNAs which is necessary to allow efficient binding of the small ribosomal subunit, and subsequent scanning for the initiator codon. The sequence is that of Eukaryotic initiation factor 4A (tifA) from Dictyostelium discoideum (Social amoeba).